A 341-amino-acid chain; its full sequence is MARITLAEIADKLGAELRGDGSVEIQSIAGMEKAAEGQITFLSASKYRKHLAECQASAVMLKEADLPFFDGNALVLKDPYLGYALLAQLLDTTPKSASNIAPSAYIADDAIIGEGAAIGHNAVIESGAQIGANVQIGAGCFIGQNAVIGAGSKVWANVSIYHSVTLGSDCLVQSGAVIGSDGFGYANDRGKWVKIPQLGSVHVGNNVEIGACTTIDRGALDDTVIADGVIIDNHCQIAHNVSIGENTAIAGATTMAGSLKIGKHCFIGGATVINGHIEITDGVTITGMGMVMRPISEPGVYSSGIPLQTNREWRKTAARVMKIEEMNKRLKSVEKKLNESN.

Histidine 239 functions as the Proton acceptor in the catalytic mechanism.

The protein belongs to the transferase hexapeptide repeat family. LpxD subfamily. Homotrimer.

It carries out the reaction a UDP-3-O-[(3R)-3-hydroxyacyl]-alpha-D-glucosamine + a (3R)-hydroxyacyl-[ACP] = a UDP-2-N,3-O-bis[(3R)-3-hydroxyacyl]-alpha-D-glucosamine + holo-[ACP] + H(+). It functions in the pathway bacterial outer membrane biogenesis; LPS lipid A biosynthesis. Functionally, catalyzes the N-acylation of UDP-3-O-acylglucosamine using 3-hydroxyacyl-ACP as the acyl donor. Is involved in the biosynthesis of lipid A, a phosphorylated glycolipid that anchors the lipopolysaccharide to the outer membrane of the cell. In Photobacterium profundum (strain SS9), this protein is UDP-3-O-acylglucosamine N-acyltransferase.